Here is a 353-residue protein sequence, read N- to C-terminus: Putrescine N-methyltransferase 2 (353 aa).

The tract at residues 15–50 is disordered; it reads KSGAIPMNGHHNGTSKHQNGHKNGTSEQQNGTISLD. Over residues 25–50 the composition is skewed to polar residues; that stretch reads HNGTSKHQNGHKNGTSEQQNGTISLD. The 238-residue stretch at 64-301 folds into the PABS domain; that stretch reads PGWFSEFSAL…GVIGYMLCST (238 aa). S-adenosyl-L-methionine is bound by residues glutamine 95, glutamate 170, and 201-202; that span reads DG. Aspartate 220 functions as the Proton acceptor in the catalytic mechanism. S-adenosyl-L-methionine is bound at residue tyrosine 289.

This sequence belongs to the class I-like SAM-binding methyltransferase superfamily. Putrescine methyltransferase family. As to expression, predominantly expressed in roots.

The enzyme catalyses putrescine + S-adenosyl-L-methionine = N-methylputrescine + S-adenosyl-L-homocysteine + H(+). It functions in the pathway alkaloid biosynthesis; nicotine biosynthesis. Functionally, involved in the biosynthesis of pyridine alkaloid natural products, leading mainly to the production of anabasine, anatabine, nicotine and nornicotine, effective deterrents against herbivores with antiparasitic and pesticide properties (neurotoxins); nornicotine serves as the precursor in the synthesis of the carcinogen compound N'-nitrosonornicotine (NNN). Methyltransferase that mediates the conversion of putrescine to N-methylputrescine. Promotes leaves ripening. The chain is Putrescine N-methyltransferase 2 from Nicotiana tabacum (Common tobacco).